Consider the following 179-residue polypeptide: Large ribosomal subunit protein uL5 (179 aa).

This sequence belongs to the universal ribosomal protein uL5 family. As to quaternary structure, part of the 50S ribosomal subunit; part of the 5S rRNA/L5/L18/L25 subcomplex. Contacts the 5S rRNA and the P site tRNA. Forms a bridge to the 30S subunit in the 70S ribosome.

Its function is as follows. This is one of the proteins that bind and probably mediate the attachment of the 5S RNA into the large ribosomal subunit, where it forms part of the central protuberance. In the 70S ribosome it contacts protein S13 of the 30S subunit (bridge B1b), connecting the 2 subunits; this bridge is implicated in subunit movement. Contacts the P site tRNA; the 5S rRNA and some of its associated proteins might help stabilize positioning of ribosome-bound tRNAs. In Geobacillus thermodenitrificans (strain NG80-2), this protein is Large ribosomal subunit protein uL5.